The chain runs to 388 residues: 1D-myo-inositol 2-acetamido-2-deoxy-alpha-D-glucopyranoside deacetylase (388 aa).

The Zn(2+) site is built by histidine 6, aspartate 9, and histidine 144. The segment at 369 to 388 (LDQADEGAAHDTSEQSGQRR) is disordered.

It belongs to the MshB deacetylase family. The cofactor is Zn(2+).

It catalyses the reaction 1D-myo-inositol 2-acetamido-2-deoxy-alpha-D-glucopyranoside + H2O = 1D-myo-inositol 2-amino-2-deoxy-alpha-D-glucopyranoside + acetate. Catalyzes the deacetylation of 1D-myo-inositol 2-acetamido-2-deoxy-alpha-D-glucopyranoside (GlcNAc-Ins) in the mycothiol biosynthesis pathway. The polypeptide is 1D-myo-inositol 2-acetamido-2-deoxy-alpha-D-glucopyranoside deacetylase (Corynebacterium kroppenstedtii (strain DSM 44385 / JCM 11950 / CIP 105744 / CCUG 35717)).